Reading from the N-terminus, the 1940-residue chain is Cilia- and flagella-associated protein 74 (1940 aa).

The tract at residues 52–90 (GSPAVTLRRAKAAAAANGTSSPGIRGSPSPARGPGGRLP) is disordered. The span at 63 to 90 (AAAAANGTSSPGIRGSPSPARGPGGRLP) shows a compositional bias: low complexity. A coiled-coil region spans residues 100 to 159 (ANVEQLKRRLQTVVAEVEGHQQRYDKVLLEANKATDLVHSMEAEIESLYVEAEELARRVP). 5 disordered regions span residues 512–548 (VAGL…QSLT), 1159–1336 (SPHV…AAAE), 1373–1418 (PQSQ…AAPP), 1714–1737 (AGDK…GASK), and 1894–1940 (PGSR…KKAV). Over residues 535 to 548 (SLTQQLAATQQSLT) the composition is skewed to low complexity. A compositionally biased stretch (gly residues) spans 1205–1220 (DGGGGGAMANGNGSGG). Residues 1227–1236 (DGEPEDGEGD) are compositionally biased toward acidic residues. Positions 1260–1271 (GRGGRGGRGGAA) are enriched in gly residues. The segment covering 1272-1282 (GEDEDEDEDAG) has biased composition (acidic residues). Low complexity predominate over residues 1287-1304 (RGKSSSSSKASSGRRSSS). Positions 1321 to 1335 (VPDDDDADAEAEAAA) are enriched in acidic residues. Residues 1373–1414 (PQSQNPTPSQSQSGQAPAASAPSDGASGAAAAAETAASSGPA) show a composition bias toward low complexity. Composition is skewed to pro residues over residues 1720 to 1731 (TPAPGIKPPATP) and 1896 to 1912 (SRPP…PAPE). Residues 1913–1929 (PVAASGPGAGAAGVKKL) are compositionally biased toward low complexity. Over residues 1930–1940 (VPPPSPPKKAV) the composition is skewed to pro residues.

This sequence belongs to the CFAP74 family. In terms of assembly, part of the PDCP1 complex composed of CFAP46, CFAP54, CFAP74 and CFAP221; the PDCP1 complex binds calmodulin.

The protein resides in the cytoplasm. The protein localises to the cytoskeleton. Its subcellular location is the cilium axoneme. Its function is as follows. As part of the central apparatus of the cilium axoneme may play a role in cilium movement and thereby cell motility. The chain is Cilia- and flagella-associated protein 74 from Chlamydomonas reinhardtii (Chlamydomonas smithii).